The sequence spans 185 residues: Ribosome-recycling factor (185 aa).

This sequence belongs to the RRF family.

It localises to the cytoplasm. Functionally, responsible for the release of ribosomes from messenger RNA at the termination of protein biosynthesis. May increase the efficiency of translation by recycling ribosomes from one round of translation to another. The protein is Ribosome-recycling factor of Legionella pneumophila (strain Corby).